A 657-amino-acid polypeptide reads, in one-letter code: Tyramine beta-hydroxylase (657 aa).

The chain crosses the membrane as a helical span at residues 77–97 (VALLFLLVAYCGGVVHAGEIV). One can recognise a DOMON domain in the interval 103–214 (TNVTVKWHTD…GTTQFYIAAS (112 aa)). Asn104 and Asn143 each carry an N-linked (GlcNAc...) asparagine glycan. Tyr278 is an active-site residue. Intrachain disulfides connect Cys280–Cys330 and Cys319–Cys342. The Cu(2+) site is built by His312 and His313. Cu(2+)-binding residues include His380, His458, His460, and Met533. 3 disulfide bridges follow: Cys437–Cys549, Cys441–Cys606, and Cys512–Cys534. Residue His458 is part of the active site. The N-linked (GlcNAc...) asparagine glycan is linked to Asn555.

It belongs to the copper type II ascorbate-dependent monooxygenase family. The cofactor is Cu(2+). In terms of tissue distribution, present in synaptic regions of RIC interneurons. Present in gonadal sheath cells of hermaphrodites (at protein level).

The protein localises to the membrane. It carries out the reaction tyramine + L-ascorbate + O2 = (R)-octopamine + L-dehydroascorbate + H2O. In terms of biological role, required for the conversion of tyramine to octopamine, a precursor of octapamine but probably itself a neurotransmitter. Involved in the regulation of egg laying, which is inhibited by tyramine. Due to its involvement in octopamine biosynthesis, also required for crtc-1-dependent regulation of AMPK-mediated longevity. This Caenorhabditis elegans protein is Tyramine beta-hydroxylase.